A 582-amino-acid polypeptide reads, in one-letter code: Threonine--tRNA ligase (582 aa).

A catalytic region spans residues 185-478 (DHRKLGKELE…LTEQYGGAFP (294 aa)). 3 residues coordinate Zn(2+): Cys-278, His-329, and His-455.

This sequence belongs to the class-II aminoacyl-tRNA synthetase family. As to quaternary structure, homodimer. It depends on Zn(2+) as a cofactor.

The protein localises to the cytoplasm. The enzyme catalyses tRNA(Thr) + L-threonine + ATP = L-threonyl-tRNA(Thr) + AMP + diphosphate + H(+). Its function is as follows. Catalyzes the attachment of threonine to tRNA(Thr) in a two-step reaction: L-threonine is first activated by ATP to form Thr-AMP and then transferred to the acceptor end of tRNA(Thr). Also edits incorrectly charged L-seryl-tRNA(Thr). The sequence is that of Threonine--tRNA ligase from Dehalococcoides mccartyi (strain ATCC BAA-2100 / JCM 16839 / KCTC 5957 / BAV1).